Reading from the N-terminus, the 201-residue chain is Imidazoleglycerol-phosphate dehydratase (201 aa).

This sequence belongs to the imidazoleglycerol-phosphate dehydratase family.

The protein localises to the cytoplasm. It catalyses the reaction D-erythro-1-(imidazol-4-yl)glycerol 3-phosphate = 3-(imidazol-4-yl)-2-oxopropyl phosphate + H2O. It functions in the pathway amino-acid biosynthesis; L-histidine biosynthesis; L-histidine from 5-phospho-alpha-D-ribose 1-diphosphate: step 6/9. This Prochlorococcus marinus subsp. pastoris (strain CCMP1986 / NIES-2087 / MED4) protein is Imidazoleglycerol-phosphate dehydratase.